The sequence spans 129 residues: NADH-quinone oxidoreductase subunit A (129 aa).

3 consecutive transmembrane segments (helical) span residues 9 to 29 (FPIGVVLLVAVVLAFTMLGLA), 68 to 88 (LLFIVFDIEAIFLYPWAVLLL), and 97 to 117 (LGWPGFVSMGIFVFTLVAGLV).

This sequence belongs to the complex I subunit 3 family. In terms of assembly, NDH-1 is composed of 14 different subunits. Subunits NuoA, H, J, K, L, M, N constitute the membrane sector of the complex.

The protein localises to the cell inner membrane. The enzyme catalyses a quinone + NADH + 5 H(+)(in) = a quinol + NAD(+) + 4 H(+)(out). In terms of biological role, NDH-1 shuttles electrons from NADH, via FMN and iron-sulfur (Fe-S) centers, to quinones in the respiratory chain. The immediate electron acceptor for the enzyme in this species is believed to be ubiquinone. Couples the redox reaction to proton translocation (for every two electrons transferred, four hydrogen ions are translocated across the cytoplasmic membrane), and thus conserves the redox energy in a proton gradient. The polypeptide is NADH-quinone oxidoreductase subunit A (Anaeromyxobacter sp. (strain K)).